The primary structure comprises 442 residues: MRGNFMSSIEKLGGLKQRLTITVPAEEVDKAYKSRLLKVARTAKIPKFRPGKASPAVVEKLYGKAILQEVGSELIQSSLREAVEEHQLQVAGAPDIKMDKILRGEPFKYVVNFEVYPEITLESLAGETIERTQVEITEEDLDKMLEALRKQYAEWKEVDRPAKADDRVIIDFEGTLDGKPFERGSAKDFQLELGSKRMIAGFEEGIEGMKPGESKALDITFPADYPSEDLAGKAAVFNITLQKVMAPELPVLDEQFAERLGIKEGGLEALRQKVRTNMEKEVHHHMENKLKMAVLDKLIERNPIEVPESLIEAEIDHLQQMTRQQVAMQTHKPDEAKKMELPRDPYREQATKRVKLGLLLAEVVKQHKIKADPEQLRARVEEVAASYQDPEKVISWYYSNKQMLSEIESVVLEDQAVAQLMSELEVKDQAIPYEEAVKQIQQ.

In terms of domain architecture, PPIase FKBP-type spans 165-250 (DDRVIIDFEG…LQKVMAPELP (86 aa)).

This sequence belongs to the FKBP-type PPIase family. Tig subfamily.

The protein localises to the cytoplasm. It catalyses the reaction [protein]-peptidylproline (omega=180) = [protein]-peptidylproline (omega=0). Its function is as follows. Involved in protein export. Acts as a chaperone by maintaining the newly synthesized protein in an open conformation. Functions as a peptidyl-prolyl cis-trans isomerase. The sequence is that of Trigger factor from Coxiella burnetii (strain CbuG_Q212) (Coxiella burnetii (strain Q212)).